The primary structure comprises 183 residues: Segregation and condensation protein B (183 aa).

It belongs to the ScpB family. As to quaternary structure, homodimer. Homodimerization may be required to stabilize the binding of ScpA to the Smc head domains. Component of a cohesin-like complex composed of ScpA, ScpB and the Smc homodimer, in which ScpA and ScpB bind to the head domain of Smc. The presence of the three proteins is required for the association of the complex with DNA.

The protein localises to the cytoplasm. Participates in chromosomal partition during cell division. May act via the formation of a condensin-like complex containing Smc and ScpA that pull DNA away from mid-cell into both cell halves. This chain is Segregation and condensation protein B, found in Streptococcus pyogenes serotype M1.